Consider the following 129-residue polypeptide: Small ribosomal subunit protein uS11 (129 aa).

The tract at residues 108–129 (TPIPHNGTRPPKRVLKRLRLKK) is disordered. The span at 117–129 (PPKRVLKRLRLKK) shows a compositional bias: basic residues.

This sequence belongs to the universal ribosomal protein uS11 family. As to quaternary structure, part of the 30S ribosomal subunit. Interacts with proteins S7 and S18. Binds to IF-3.

Located on the platform of the 30S subunit, it bridges several disparate RNA helices of the 16S rRNA. Forms part of the Shine-Dalgarno cleft in the 70S ribosome. The chain is Small ribosomal subunit protein uS11 from Mycoplasmopsis synoviae (strain 53) (Mycoplasma synoviae).